The primary structure comprises 195 residues: Peptidyl-tRNA hydrolase (195 aa).

Tyr-17 is a tRNA binding site. The active-site Proton acceptor is His-22. Positions 68, 70, and 116 each coordinate tRNA.

This sequence belongs to the PTH family. Monomer.

The protein localises to the cytoplasm. The enzyme catalyses an N-acyl-L-alpha-aminoacyl-tRNA + H2O = an N-acyl-L-amino acid + a tRNA + H(+). In terms of biological role, hydrolyzes ribosome-free peptidyl-tRNAs (with 1 or more amino acids incorporated), which drop off the ribosome during protein synthesis, or as a result of ribosome stalling. Functionally, catalyzes the release of premature peptidyl moieties from peptidyl-tRNA molecules trapped in stalled 50S ribosomal subunits, and thus maintains levels of free tRNAs and 50S ribosomes. This chain is Peptidyl-tRNA hydrolase, found in Erwinia tasmaniensis (strain DSM 17950 / CFBP 7177 / CIP 109463 / NCPPB 4357 / Et1/99).